The primary structure comprises 257 residues: MTAIRVCSRKFPTFASIFFQNITRNPSIHRISFSNLKPKTLLHPIPPKPFTVFVSRFHDGRPRGPLWRGKKLIGKEALFVILGLKRLKEDDEKLDKFIKTHVFRLLKLDMLAVIGELERQEETALAIKMFEVIQKQEWYQPDVFMYKDLIVSLAKSKRMDEAMALWEKMKKENLFPDSQTYTEVIRGFLRDGCPADAMNVYEDMLKSPDPPEELPFRVLLKGLLPHPLLRNKVKKDFEELFPEKHAYDPPEEIFGRC.

The transit peptide at 1-55 (MTAIRVCSRKFPTFASIFFQNITRNPSIHRISFSNLKPKTLLHPIPPKPFTVFVS) directs the protein to the chloroplast. 2 PPR repeats span residues 142 to 176 (DVFM…NLFP) and 177 to 211 (DSQT…PDPP).

The protein belongs to the PPR family. P subfamily.

It localises to the plastid. The protein resides in the chloroplast. Functionally, binds weakly to specific single strand RNA (ssRNA). This is Protein THYLAKOID ASSEMBLY 8-like, chloroplastic from Arabidopsis thaliana (Mouse-ear cress).